Reading from the N-terminus, the 375-residue chain is Alpha-2,8-sialyltransferase 8B (375 aa).

Over 1–6 the chain is Cytoplasmic; that stretch reads MQLQFR. Residues 7–23 traverse the membrane as a helical; Signal-anchor for type II membrane protein segment; it reads SWMLAALTLLVVFLIFA. Over 24-375 the chain is Lumenal; sequence DISEIEEEIG…LTVGQCDGAT (352 aa). N-linked (GlcNAc...) asparagine glycosylation is found at Asn60, Asn72, Asn89, and Asn134. Cystine bridges form between Cys157–Cys307 and Cys171–Cys371. CMP-N-acetyl-beta-neuraminate-binding residues include Asn162 and Asn185. Asn219 and Asn234 each carry an N-linked (GlcNAc...) asparagine glycan. CMP-N-acetyl-beta-neuraminate contacts are provided by Thr294, Thr295, Gly296, Trp316, Tyr329, and His330. His346 acts as the Proton donor/acceptor in catalysis.

This sequence belongs to the glycosyltransferase 29 family. In terms of processing, autopolysialylated. Autopolysialylation is not a prerequisite for the polysialylation acitity, but enhances the polysialylation acitity.

Its subcellular location is the golgi apparatus membrane. It is found in the secreted. The protein localises to the cell membrane. The catalysed reaction is [N-acetyl-alpha-D-neuraminosyl-(2-&gt;8)](n) + CMP-N-acetyl-beta-neuraminate = [N-acetyl-alpha-D-neuraminosyl-(2-&gt;8)](n+1) + CMP + H(+). The protein operates within protein modification; protein glycosylation. Catalyzes the transfer of a sialic acid from a CMP-linked sialic acid donor onto a terminal alpha-2,3-, alpha-2,6-, or alpha-2,8-linked sialic acid of an N-linked glycan acceptor through alpha-2,8-linkages. Therefore, participates in polysialic acid synthesis on various sialylated N-acetyllactosaminyl oligosaccharides (alpha-2,3-, alpha-2,6-, or alpha-2,8-linked sialic acid), including NCAM1, NCAM1 N-glycans, FETUB N-glycans, and to a lesser extent sialylparagloboside (SPG) and AHSG, which does not require the initial addition of an alpha 2,8-sialic acid. However, does not exhibit sialic acid-polymerase activity. Catalyzes polysialic acid synthesis in the hippocampal on NCAM1 and supports neurite outgrowth. ST8SIA2-mediated polysialylation influences on oligodendrocyte differentiation and may promote the integrity of myelin and axons. The polypeptide is Alpha-2,8-sialyltransferase 8B (Pan troglodytes (Chimpanzee)).